Here is a 917-residue protein sequence, read N- to C-terminus: Spermatogenesis-associated protein 31D3 (917 aa).

The chain crosses the membrane as a helical span at residues Phe-29 to Leu-49. 3 disordered regions span residues Glu-55–Lys-80, Ser-152–Leu-195, and Ser-773–Asn-797. Positions His-63–Val-74 are enriched in basic residues. Positions Ser-152 to Ala-163 are enriched in low complexity. The span at Glu-164–Thr-177 shows a compositional bias: polar residues. Residues Leu-782–Asn-797 show a composition bias toward basic and acidic residues.

It belongs to the SPATA31 family.

It is found in the membrane. Functionally, may play a role in spermatogenesis. The polypeptide is Spermatogenesis-associated protein 31D3 (SPATA31D3) (Homo sapiens (Human)).